A 65-amino-acid chain; its full sequence is RSGKLDAFLVLEQLRCNGVLEGIRICRQGFPNRIVFQEFRQRYEILAANAIPKLRNWQWWRLFTK.

The Myosin motor domain maps to 1-65 (RSGKLDAFLV…NWQWWRLFTK (65 aa)).

The protein belongs to the TRAFAC class myosin-kinesin ATPase superfamily. Myosin family. In terms of assembly, muscle myosin is a hexameric protein that consists of 2 heavy chain subunits (MHC), 2 alkali light chain subunits (MLC) and 2 regulatory light chain subunits (MLC-2).

It is found in the melanosome. The protein localises to the cytoplasm. The protein resides in the myofibril. In terms of biological role, muscle contraction. The chain is Myosin-11 (MYH11) from Sus scrofa (Pig).